The primary structure comprises 517 residues: Crotonobetaine/carnitine--CoA ligase (517 aa).

Belongs to the ATP-dependent AMP-binding enzyme family.

The enzyme catalyses 4-(trimethylamino)butanoate + ATP + CoA = 4-(trimethylamino)butanoyl-CoA + AMP + diphosphate. The catalysed reaction is crotonobetaine + ATP + CoA = crotonobetainyl-CoA + AMP + diphosphate. It catalyses the reaction (R)-carnitine + ATP + CoA = (R)-carnitinyl-CoA + AMP + diphosphate. The protein operates within amine and polyamine metabolism; carnitine metabolism. Its function is as follows. Catalyzes the transfer of CoA to carnitine, generating the initial carnitinyl-CoA needed for the CaiB reaction cycle. Also has activity toward crotonobetaine and gamma-butyrobetaine. The protein is Crotonobetaine/carnitine--CoA ligase of Salmonella paratyphi A (strain ATCC 9150 / SARB42).